Here is a 664-residue protein sequence, read N- to C-terminus: Cyclic nucleotide-gated channel alpha-2 (664 aa).

The segment covering 1-10 has biased composition (polar residues); sequence MMTEKSNGVK. Residues 1–61 form a disordered region; it reads MMTEKSNGVK…LQRLAEMDTP (61 aa). At 1 to 146 the chain is on the cytoplasmic side; it reads MMTEKSNGVK…PAGDWYYRWL (146 aa). Residues 147–168 traverse the membrane as a helical segment; the sequence is FVIAMPVLYNWCLLVARACFSD. Residues 169-178 are Extracellular-facing; that stretch reads LQRNYFVVWL. A helical membrane pass occupies residues 179–199; sequence VLDYFSDTVYIADLIIRLRTG. The Cytoplasmic segment spans residues 200-224; the sequence is FLEQGLLVKDPKKLRDNYIHTLQFK. Residues 225-243 traverse the membrane as a helical segment; the sequence is LDVASIIPTDLIYFAVGIH. The Extracellular segment spans residues 244-248; sequence SPEVR. A helical transmembrane segment spans residues 249–267; it reads FNRLLHFARMFEFFDRTET. Residues 268–274 are Cytoplasmic-facing; that stretch reads RTSYPNI. The tract at residues 272–380 is ion conduction pathway; that stretch reads PNIFRISNLV…GNVGSMISNM (109 aa). A helical transmembrane segment spans residues 275 to 298; it reads FRISNLVLYILVIIHWNACIYYAI. Over 299-321 the chain is Extracellular; that stretch reads SKSIGFGVDTWVYPNITDPEYGY. 2 consecutive transmembrane segments (helical) span residues 322 to 356 and 357 to 381; these read LARE…LFVI and FDFL…SNMN. Residues 339–342 form a selectivity filter region; that stretch reads TIGE. The interval 382–458 is C-linker; the sequence is ATRAEFQAKI…STLKKVRIFQ (77 aa). Residues 382 to 664 lie on the Cytoplasmic side of the membrane; it reads ATRAEFQAKI…INTPEPAVAE (283 aa). The cyclic nucleotide-binding domain stretch occupies residues 462–582; sequence AGLLVELVLK…EERGREILMK (121 aa). Residues glycine 522, serine 525, arginine 538, and threonine 539 each coordinate 3',5'-cyclic GMP. 3',5'-cyclic AMP-binding residues include arginine 538 and threonine 539. The stretch at 599–653 forms a coiled coil; it reads VQEKLEQLETNMETLYTRFARLLAEYTGAQQKLKQRITVLETKMKQNHEDDYLSD.

Belongs to the cyclic nucleotide-gated cation channel (TC 1.A.1.5) family. CNGA2 subfamily. The olfactory cyclic nucleotide-gated channel is an heterotetramer composed of CNGA2, CNGA4 and CNGB1b subunits with 2:1:1 stoichiometry.

It localises to the cell projection. The protein resides in the cilium membrane. The enzyme catalyses Ca(2+)(in) = Ca(2+)(out). It catalyses the reaction Na(+)(in) = Na(+)(out). It carries out the reaction K(+)(in) = K(+)(out). The catalysed reaction is NH4(+)(in) = NH4(+)(out). The enzyme catalyses Rb(+)(in) = Rb(+)(out). It catalyses the reaction Li(+)(in) = Li(+)(out). It carries out the reaction Cs(+)(in) = Cs(+)(out). Its function is as follows. Pore-forming subunit of the olfactory cyclic nucleotide-gated channel. Operates in the cilia of olfactory sensory neurons where chemical stimulation of the odorant is converted to an electrical signal. Mediates odorant-induced cAMP-dependent Ca(2+) influx triggering neuron depolarization. The rise of intracellular Ca(2+) levels potentiates the olfactory response by activating Ca(2+)-dependent Cl(-) channels, but it also serves as a negative feedback signal to desensitize the channel for rapid adaptation to odorants. Conducts cAMP- and cGMP-gated ion currents, with permeability for monovalent and divalent cations. The polypeptide is Cyclic nucleotide-gated channel alpha-2 (Mus musculus (Mouse)).